The sequence spans 482 residues: tRNA sulfurtransferase (482 aa).

The region spanning 61 to 165 is the THUMP domain; that stretch reads LAIRDALTRI…DDRLLLIKGR (105 aa). ATP contacts are provided by residues 183–184, lysine 265, glycine 287, and glutamine 296; that span reads LI. Cysteine 344 and cysteine 456 are disulfide-bonded. Residues 404 to 482 form the Rhodanese domain; it reads FGANDVILDI…GFANVKVYRP (79 aa). Cysteine 456 acts as the Cysteine persulfide intermediate in catalysis.

It belongs to the ThiI family.

It localises to the cytoplasm. The enzyme catalyses [ThiI sulfur-carrier protein]-S-sulfanyl-L-cysteine + a uridine in tRNA + 2 reduced [2Fe-2S]-[ferredoxin] + ATP + H(+) = [ThiI sulfur-carrier protein]-L-cysteine + a 4-thiouridine in tRNA + 2 oxidized [2Fe-2S]-[ferredoxin] + AMP + diphosphate. The catalysed reaction is [ThiS sulfur-carrier protein]-C-terminal Gly-Gly-AMP + S-sulfanyl-L-cysteinyl-[cysteine desulfurase] + AH2 = [ThiS sulfur-carrier protein]-C-terminal-Gly-aminoethanethioate + L-cysteinyl-[cysteine desulfurase] + A + AMP + 2 H(+). It participates in cofactor biosynthesis; thiamine diphosphate biosynthesis. Catalyzes the ATP-dependent transfer of a sulfur to tRNA to produce 4-thiouridine in position 8 of tRNAs, which functions as a near-UV photosensor. Also catalyzes the transfer of sulfur to the sulfur carrier protein ThiS, forming ThiS-thiocarboxylate. This is a step in the synthesis of thiazole, in the thiamine biosynthesis pathway. The sulfur is donated as persulfide by IscS. This is tRNA sulfurtransferase from Salmonella paratyphi B (strain ATCC BAA-1250 / SPB7).